A 317-amino-acid polypeptide reads, in one-letter code: Ribosomal protein L11 methyltransferase (317 aa).

S-adenosyl-L-methionine contacts are provided by Thr-158, Gly-179, Asp-201, and Asn-244.

It belongs to the methyltransferase superfamily. PrmA family.

Its subcellular location is the cytoplasm. The enzyme catalyses L-lysyl-[protein] + 3 S-adenosyl-L-methionine = N(6),N(6),N(6)-trimethyl-L-lysyl-[protein] + 3 S-adenosyl-L-homocysteine + 3 H(+). Functionally, methylates ribosomal protein L11. The sequence is that of Ribosomal protein L11 methyltransferase from Streptococcus uberis (strain ATCC BAA-854 / 0140J).